A 280-amino-acid chain; its full sequence is Probable holocytochrome-c-type synthase (280 aa).

A disordered region spans residues 1–95; sequence MGSSQSTPKV…FALPTKREKS (95 aa). 2 HRM repeats span residues 35-40 and 56-61; these read QCPLTP and ACPVGA.

It belongs to the cytochrome c-type heme lyase family.

It localises to the mitochondrion inner membrane. The catalysed reaction is holo-[cytochrome c] = apo-[cytochrome c] + heme b. Probable lyase that catalyzes the covalent linking of the heme group to the cytochrome C apoprotein to produce the mature functional cytochrome. This is Probable holocytochrome-c-type synthase (cchl-1) from Caenorhabditis elegans.